The primary structure comprises 350 residues: MKKLVATAPRVAALVEYEDRAILANEVKIRVRFGAPKHGTEVVDFRAASPFIDEDFNGEWQMFTPRPADAPRGIEFGKFQLGNMVVGDIIECGSDVTDYAVGDSVCGYGPLSETVIINAVNNYKLRKMPQGSSWKNAVCYDPAQFAMSGVRDANVRVGDFVVVVGLGAIGQIAIQLAKRAGASVVIGVDPIAHRCDIARRHGADFCLNPIGTDVGKEIKTLTGKQGADVIIETSGYADALQSALRGLAYGGTISYVAFAKPFAEGFNLGREAHFNNAKIVFSRACSEPNPDYPRWSRKRIEETCWELLMNGYLNCEDLIDPVVTFANSPESYMQYVDQHPEQSIKMGVTF.

This sequence belongs to the zinc-containing alcohol dehydrogenase family. Requires Zn(2+) as cofactor.

It carries out the reaction a D-guloside + NAD(+) = a 3-dehydro-D-guloside + NADH + H(+). Its function is as follows. Catalyzes the NAD(+)-dependent oxidation of the hydroxyl group at C3 of D-gulosides leading to 3-dehydro-D-gulosides. Probably functions in a metabolic pathway that transforms D-gulosides to D-glucosides. Is also able to catalyze the reverse reactions, i.e. the NADH-dependent reduction of the oxo group at C3 of 3-dehydro-D-gulosides leading to D-gulosides. In vitro, can oxidize D-gulose and methyl beta-D-guloside, and reduce methyl alpha-3-dehydro-D-guloside and methyl beta-3-dehydro-D-guloside. However, the actual specific physiological substrates for this metabolic pathway are unknown. The polypeptide is D-guloside 3-dehydrogenase (ycjQ) (Escherichia coli (strain K12)).